A 108-amino-acid polypeptide reads, in one-letter code: MFVQLRKMTVKEGFADKVIERFSAEGIIEKQEGLIDVTVLEKNVRRGDEEVVVMIRWESEDHWKQWEKSDAHIAGHKANKGKPKPDYLISTEVSMYHVRAVKQGTYNQ.

An ABM domain is found at 2–95; sequence FVQLRKMTVK…DYLISTEVSM (94 aa). Position 76 (His-76) interacts with heme.

This sequence belongs to the antibiotic biosynthesis monooxygenase family. In terms of assembly, homodimer.

The protein resides in the cytoplasm. It carries out the reaction heme b + 3 reduced [NADPH--hemoprotein reductase] + 3 O2 = biliverdin IXalpha + CO + Fe(2+) + 3 oxidized [NADPH--hemoprotein reductase] + 3 H2O + H(+). Allows bacterial pathogens to use the host heme as an iron source. Catalyzes the oxidative degradation of the heme macrocyclic porphyrin ring in the presence of a suitable electron donor such as ascorbate or NADPH--cytochrome P450 reductase, with subsequent release of free iron. The sequence is that of Heme-degrading monooxygenase HmoA (hmoA) from Bacillus subtilis (strain 168).